The chain runs to 779 residues: Ribonucleoside-diphosphate reductase large subunit (779 aa).

Substrate is bound by residues serine 178, 193 to 194 (SC), glycine 222, 420 to 424 (NLCIE), and 614 to 618 (PTATS). Residues cysteine 194 and cysteine 440 are joined by a disulfide bond. Asparagine 420 serves as the catalytic Proton acceptor. Catalysis depends on cysteine 422, which acts as the Cysteine radical intermediate. Glutamate 424 functions as the Proton acceptor in the catalytic mechanism.

The protein belongs to the ribonucleoside diphosphate reductase large chain family. As to quaternary structure, heterotetramer composed of a homodimer of the large subunit (R1) and a homodimer of the small subunit (R2). Larger multisubunit protein complex are also active, composed of (R1)n(R2)n.

The enzyme catalyses a 2'-deoxyribonucleoside 5'-diphosphate + [thioredoxin]-disulfide + H2O = a ribonucleoside 5'-diphosphate + [thioredoxin]-dithiol. Its activity is regulated as follows. Under complex allosteric control mediated by deoxynucleoside triphosphates and ATP binding. The type of nucleotide bound at the specificity site determines substrate preference. It seems probable that ATP makes the enzyme reduce CDP and UDP, dGTP favors ADP reduction and dTTP favors GDP reduction. Ribonucleoside-diphosphate reductase holoenzyme provides the precursors necessary for viral DNA synthesis. Allows virus growth in non-dividing cells. Catalyzes the biosynthesis of deoxyribonucleotides from the corresponding ribonucleotides. This is Ribonucleoside-diphosphate reductase large subunit from African swine fever virus (isolate Tick/Malawi/Lil 20-1/1983) (ASFV).